Here is an 833-residue protein sequence, read N- to C-terminus: Leucine--tRNA ligase (833 aa).

Positions 41-52 match the 'HIGH' region motif; the sequence is PYPSGAGLHVGH. The 'KMSKS' region signature appears at 610–614; it reads KMSKS. Residue K613 participates in ATP binding.

It belongs to the class-I aminoacyl-tRNA synthetase family.

The protein localises to the cytoplasm. It carries out the reaction tRNA(Leu) + L-leucine + ATP = L-leucyl-tRNA(Leu) + AMP + diphosphate. This is Leucine--tRNA ligase from Streptococcus pyogenes serotype M28 (strain MGAS6180).